A 679-amino-acid chain; its full sequence is DNA ligase (679 aa).

Residues 86-90 (DEAYD) and 129-130 (ST) each bind NAD(+). The active-site N6-AMP-lysine intermediate is the K167. NAD(+)-binding residues include R183, E214, and K326. Positions 417, 420, 433, and 439 each coordinate Zn(2+). The BRCT domain occupies 599 to 679 (GEKSPISGKT…EAYRQLVSLD (81 aa)).

This sequence belongs to the NAD-dependent DNA ligase family. LigA subfamily. Mg(2+) serves as cofactor. The cofactor is Mn(2+).

The catalysed reaction is NAD(+) + (deoxyribonucleotide)n-3'-hydroxyl + 5'-phospho-(deoxyribonucleotide)m = (deoxyribonucleotide)n+m + AMP + beta-nicotinamide D-nucleotide.. In terms of biological role, DNA ligase that catalyzes the formation of phosphodiester linkages between 5'-phosphoryl and 3'-hydroxyl groups in double-stranded DNA using NAD as a coenzyme and as the energy source for the reaction. It is essential for DNA replication and repair of damaged DNA. The protein is DNA ligase of Desulfotalea psychrophila (strain LSv54 / DSM 12343).